Reading from the N-terminus, the 154-residue chain is Myoglobin (154 aa).

In terms of domain architecture, Globin spans 2 to 148 (GLSDQEWQHV…FRNDMASKYK (147 aa)). His-65 contributes to the nitrite binding site. Residue His-65 participates in O2 binding. His-94 is a binding site for heme b.

Belongs to the globin family. As to quaternary structure, monomeric.

It is found in the cytoplasm. The protein resides in the sarcoplasm. The catalysed reaction is Fe(III)-heme b-[protein] + nitric oxide + H2O = Fe(II)-heme b-[protein] + nitrite + 2 H(+). It catalyses the reaction H2O2 + AH2 = A + 2 H2O. Its function is as follows. Monomeric heme protein which primary function is to store oxygen and facilitate its diffusion within muscle tissues. Reversibly binds oxygen through a pentacoordinated heme iron and enables its timely and efficient release as needed during periods of heightened demand. Depending on the oxidative conditions of tissues and cells, and in addition to its ability to bind oxygen, it also has a nitrite reductase activity whereby it regulates the production of bioactive nitric oxide. Under stress conditions, like hypoxia and anoxia, it also protects cells against reactive oxygen species thanks to its pseudoperoxidase activity. The sequence is that of Myoglobin (MB) from Uria lomvia (Thick-billed murre).